The chain runs to 221 residues: SIN3-HDAC complex-associated factor (221 aa).

Positions 112–121 (QKEFKRHNSD) are enriched in basic and acidic residues. Disordered regions lie at residues 112–152 (QKEF…MASG) and 201–221 (AAAE…TQEW). The segment covering 124–135 (STTSSASPAQSP) has biased composition (low complexity). Over residues 136-152 (CYSNQSDDGSDTEMASG) the composition is skewed to polar residues.

Belongs to the SINHCAF family. Interacts with the Sin3/HDAC corepressor complex at least composed of BRMS1, BRMS1L, ING2, SAP30, SAP30L and HDAC1. Found in a complex composed of at least SINHCAF, SIN3A, HDAC1, SAP30, RBBP4, OGT and TET1. Interacts with SIN3A and OGT.

It is found in the nucleus. Subunit of the Sin3 deacetylase complex (Sin3/HDAC), this subunit is important for the repression of genes encoding components of the TGF-beta signaling pathway. Core component of a SIN3A complex (composed of at least SINHCAF, SIN3A, HDAC1, SAP30, RBBP4, OGT and TET1) present in embryonic stem (ES) cells. Promotes the stability of SIN3A and its presence on chromatin and is essential for maintaining the potential of ES cells to proliferate rapidly, while ensuring a short G1-phase of the cell cycle, thereby preventing premature lineage priming. In Homo sapiens (Human), this protein is SIN3-HDAC complex-associated factor.